The chain runs to 274 residues: 16S rRNA (guanine(1405)-N(7))-methyltransferase (274 aa).

Residues Phe64, 102–104, Arg108, Ala133, Asp156, 182–183, Leu198, and Gln207 contribute to the S-adenosyl-L-methionine site; these read HMS and DL.

The protein belongs to the methyltransferase superfamily. Aminoglycoside resistance family.

The enzyme catalyses guanosine(1405) in 16S rRNA + S-adenosyl-L-methionine = N(7)-methylguanosine(1405) in 16S rRNA + S-adenosyl-L-homocysteine. Its function is as follows. Specifically methylates the N(7) position of guanine 1405 in 16S rRNA. Confers resistance to aminoglycosides. The protein is 16S rRNA (guanine(1405)-N(7))-methyltransferase (grm) of Micromonospora rosea.